The following is a 657-amino-acid chain: Probable potassium transport system protein Kup (657 aa).

Transmembrane regions (helical) follow at residues 14–34 (IGGL…SPLY), 47–67 (ADIV…QTTI), 96–116 (IQWL…DGII), 140–160 (TIVY…QFGT), 166–186 (FFAP…FIQI), 201–221 (AYHL…VFLC), 242–262 (ISWI…AAYL), 283–303 (LIMP…AAVI), 340–360 (LYIP…VLHF), 371–391 (GLAI…YLIM), 396–416 (LYFM…FLIA), and 425–445 (GYVT…WYLA).

Belongs to the HAK/KUP transporter (TC 2.A.72) family.

Its subcellular location is the cell inner membrane. It carries out the reaction K(+)(in) + H(+)(in) = K(+)(out) + H(+)(out). Its function is as follows. Transport of potassium into the cell. Likely operates as a K(+):H(+) symporter. This Flavobacterium johnsoniae (strain ATCC 17061 / DSM 2064 / JCM 8514 / BCRC 14874 / CCUG 350202 / NBRC 14942 / NCIMB 11054 / UW101) (Cytophaga johnsonae) protein is Probable potassium transport system protein Kup.